A 262-amino-acid polypeptide reads, in one-letter code: Lysosomal-associated transmembrane protein 5 (262 aa).

5 consecutive transmembrane segments (helical) span residues 19–39 (IATT…FIEH), 64–84 (ISSF…LIGV), 92–112 (LLPF…TLLG), 134–154 (FPLM…LCSS), and 184–204 (FIKM…FKVY). Tyr259 bears the Phosphotyrosine mark.

Belongs to the LAPTM4/LAPTM5 transporter family. Binds to ubiquitin.

The protein resides in the lysosome membrane. In terms of biological role, may have a special functional role during embryogenesis and in adult hematopoietic cells. The chain is Lysosomal-associated transmembrane protein 5 (LAPTM5) from Pongo abelii (Sumatran orangutan).